Reading from the N-terminus, the 552-residue chain is Phosphoglucomutase (552 aa).

Ser-143 acts as the Phosphoserine intermediate in catalysis. Mg(2+) is bound by residues Ser-143, Asp-295, Asp-297, and Asp-299.

The protein belongs to the phosphohexose mutase family. It depends on Mg(2+) as a cofactor.

It catalyses the reaction alpha-D-glucose 1-phosphate = alpha-D-glucose 6-phosphate. The protein operates within glycolipid metabolism; diglucosyl-diacylglycerol biosynthesis. Functionally, catalyzes the interconversion between glucose-6-phosphate and alpha-glucose-1-phosphate. This is the first step in the biosynthesis of diglucosyl-diacylglycerol (Glc2-DAG), i.e. the predominant glycolipid found in the S.aureus membrane, which is also used as a membrane anchor for lipoteichoic acid (LTA). The protein is Phosphoglucomutase (pgcA) of Staphylococcus aureus (strain MSSA476).